We begin with the raw amino-acid sequence, 143 residues long: Nucleoside diphosphate kinase (143 aa).

ATP is bound by residues lysine 11, phenylalanine 59, arginine 87, threonine 93, arginine 104, and asparagine 114. Histidine 117 acts as the Pros-phosphohistidine intermediate in catalysis.

Belongs to the NDK family. As to quaternary structure, homotetramer. The cofactor is Mg(2+).

The protein localises to the cytoplasm. It carries out the reaction a 2'-deoxyribonucleoside 5'-diphosphate + ATP = a 2'-deoxyribonucleoside 5'-triphosphate + ADP. It catalyses the reaction a ribonucleoside 5'-diphosphate + ATP = a ribonucleoside 5'-triphosphate + ADP. Major role in the synthesis of nucleoside triphosphates other than ATP. The ATP gamma phosphate is transferred to the NDP beta phosphate via a ping-pong mechanism, using a phosphorylated active-site intermediate. This is Nucleoside diphosphate kinase from Shewanella pealeana (strain ATCC 700345 / ANG-SQ1).